The sequence spans 860 residues: Leucine--tRNA ligase (860 aa).

The 'HIGH' region motif lies at 42-52 (PYPSGRLHMGH). The short motif at 619–623 (KMSKS) is the 'KMSKS' region element. Lys622 contacts ATP.

The protein belongs to the class-I aminoacyl-tRNA synthetase family.

It localises to the cytoplasm. The enzyme catalyses tRNA(Leu) + L-leucine + ATP = L-leucyl-tRNA(Leu) + AMP + diphosphate. The chain is Leucine--tRNA ligase from Salmonella paratyphi B (strain ATCC BAA-1250 / SPB7).